Reading from the N-terminus, the 429-residue chain is Glutamate-1-semialdehyde 2,1-aminomutase (429 aa).

An N6-(pyridoxal phosphate)lysine modification is found at Lys-265.

Belongs to the class-III pyridoxal-phosphate-dependent aminotransferase family. HemL subfamily. In terms of assembly, homodimer. It depends on pyridoxal 5'-phosphate as a cofactor.

It localises to the cytoplasm. The enzyme catalyses (S)-4-amino-5-oxopentanoate = 5-aminolevulinate. It functions in the pathway porphyrin-containing compound metabolism; protoporphyrin-IX biosynthesis; 5-aminolevulinate from L-glutamyl-tRNA(Glu): step 2/2. This chain is Glutamate-1-semialdehyde 2,1-aminomutase, found in Shewanella piezotolerans (strain WP3 / JCM 13877).